The primary structure comprises 81 residues: ATP synthase subunit c (81 aa).

2 consecutive transmembrane segments (helical) span residues 5–25 (VAAA…IGPG) and 57–77 (LAFM…LLFA).

The protein belongs to the ATPase C chain family. As to quaternary structure, F-type ATPases have 2 components, F(1) - the catalytic core - and F(0) - the membrane proton channel. F(1) has five subunits: alpha(3), beta(3), gamma(1), delta(1), epsilon(1). F(0) has four main subunits: a(1), b(1), b'(1) and c(10-14). The alpha and beta chains form an alternating ring which encloses part of the gamma chain. F(1) is attached to F(0) by a central stalk formed by the gamma and epsilon chains, while a peripheral stalk is formed by the delta, b and b' chains.

Its subcellular location is the cellular thylakoid membrane. F(1)F(0) ATP synthase produces ATP from ADP in the presence of a proton or sodium gradient. F-type ATPases consist of two structural domains, F(1) containing the extramembraneous catalytic core and F(0) containing the membrane proton channel, linked together by a central stalk and a peripheral stalk. During catalysis, ATP synthesis in the catalytic domain of F(1) is coupled via a rotary mechanism of the central stalk subunits to proton translocation. In terms of biological role, key component of the F(0) channel; it plays a direct role in translocation across the membrane. A homomeric c-ring of between 10-14 subunits forms the central stalk rotor element with the F(1) delta and epsilon subunits. This is ATP synthase subunit c from Microcystis aeruginosa (strain NIES-843 / IAM M-2473).